A 284-amino-acid polypeptide reads, in one-letter code: tRNA uridine(34) hydroxylase (284 aa).

The Rhodanese domain maps to 132–226; the sequence is AGRPVVMLDT…YFEEVGGAHY (95 aa). Cysteine 186 acts as the Cysteine persulfide intermediate in catalysis.

It belongs to the TrhO family.

It catalyses the reaction uridine(34) in tRNA + AH2 + O2 = 5-hydroxyuridine(34) in tRNA + A + H2O. Functionally, catalyzes oxygen-dependent 5-hydroxyuridine (ho5U) modification at position 34 in tRNAs. The chain is tRNA uridine(34) hydroxylase from Burkholderia ambifaria (strain MC40-6).